The sequence spans 387 residues: MGASWHQTIRALGSAHHVEVDGSQRHRMCQNEFVEVLNRGKPSVEQIIRIGMDTSKSVFQLHGVNAVEQPILRKKLSRREMVKFFEKTPPTIIALEACGGSHHWARLLSSFGHEVKLIAPQLAKPYVKRGKNDAADAEALCEAMSRPTMRFVPMKTADQQAALMLVGMRERLIRNRTQLANAIRGFAMEFGIVAAKGMCRIEALLERIAADPSLPELAQDLFALHGQEYRELACQIKTLDEKLMKLHRADECSKRLAEIPGVGPIGASLLLMKTPDPRMFKSGRDFAAWIGLTPKDHSTAGKVRLGVITRAGDEMLRSILVVGATSLLQQVRTGRSRHASAWLMGLLQRKRPKLVAVALANKLARIAWKLMTSGESYRQAEGQAQTS.

Belongs to the transposase 20 family.

This chain is Putative transposase y4pF/y4sB, found in Sinorhizobium fredii (strain NBRC 101917 / NGR234).